Consider the following 556-residue polypeptide: Oxygen-dependent choline dehydrogenase (556 aa).

4–33 (DYIIIGAGSAGNVLATRLTEDPNTTVLLLE) contributes to the FAD binding site. His-473 acts as the Proton acceptor in catalysis.

It belongs to the GMC oxidoreductase family. FAD is required as a cofactor.

The catalysed reaction is choline + A = betaine aldehyde + AH2. It catalyses the reaction betaine aldehyde + NAD(+) + H2O = glycine betaine + NADH + 2 H(+). Its pathway is amine and polyamine biosynthesis; betaine biosynthesis via choline pathway; betaine aldehyde from choline (cytochrome c reductase route): step 1/1. Functionally, involved in the biosynthesis of the osmoprotectant glycine betaine. Catalyzes the oxidation of choline to betaine aldehyde and betaine aldehyde to glycine betaine at the same rate. This chain is Oxygen-dependent choline dehydrogenase, found in Escherichia coli O17:K52:H18 (strain UMN026 / ExPEC).